A 195-amino-acid chain; its full sequence is MKIGILGGTFDPIHYGHLWFAEYARERFKLDKVFFIPNKIPPHRETPLATSKQRYEMVLLATLSNPCFEVLPIELEREGISYMVDTIRDLSSCFSFDELYLLLGNDAFRDFLKWKEPYKIIEKASIIVGSRGIEDYSSDLKNFIKNFENKIFFLDFPYYPISAKEIRERVKRGLSIKYLVPESVEDYIIKNGIYL.

It belongs to the NadD family.

The enzyme catalyses nicotinate beta-D-ribonucleotide + ATP + H(+) = deamido-NAD(+) + diphosphate. Its pathway is cofactor biosynthesis; NAD(+) biosynthesis; deamido-NAD(+) from nicotinate D-ribonucleotide: step 1/1. Functionally, catalyzes the reversible adenylation of nicotinate mononucleotide (NaMN) to nicotinic acid adenine dinucleotide (NaAD). In Dictyoglomus thermophilum (strain ATCC 35947 / DSM 3960 / H-6-12), this protein is Probable nicotinate-nucleotide adenylyltransferase.